Here is a 359-residue protein sequence, read N- to C-terminus: N-acetyl-gamma-glutamyl-phosphate reductase (359 aa).

Cysteine 162 is an active-site residue.

It belongs to the NAGSA dehydrogenase family. Type 1 subfamily.

Its subcellular location is the cytoplasm. It carries out the reaction N-acetyl-L-glutamate 5-semialdehyde + phosphate + NADP(+) = N-acetyl-L-glutamyl 5-phosphate + NADPH + H(+). It functions in the pathway amino-acid biosynthesis; L-arginine biosynthesis; N(2)-acetyl-L-ornithine from L-glutamate: step 3/4. Catalyzes the NADPH-dependent reduction of N-acetyl-5-glutamyl phosphate to yield N-acetyl-L-glutamate 5-semialdehyde. The sequence is that of N-acetyl-gamma-glutamyl-phosphate reductase from Prochlorococcus marinus (strain MIT 9211).